The chain runs to 312 residues: MKPSPRTPDFSPYLDFDRAQWRELRNSMPQVLTQKEVIELRGIGENIDLAEVAEVYLPLSRLIHLQVAARQQLTAATETFLGTSPSISVPFVIGVAGSVAVGKSTTARLLQVLLQRWNSHPRVDLVTTDGFLYPGAELIRRGLMSRKGFPESYDQRALLRFVTDVKSGKLEVNAPVYSHTAYDRVPGEFTTVRQPDILIVEGLNVLQTGPTLMVSDLFDFSVYVDARTEDIEKWYIDRFLKLRDTAFRRPGAHFSHYADMADPESIAVARELWQSINLPNLVENILPTRVRASLVLKKGSDHLVERVRMRKI.

97–104 (GSVAVGKS) is a binding site for ATP.

The protein belongs to the prokaryotic pantothenate kinase family.

The protein resides in the cytoplasm. It catalyses the reaction (R)-pantothenate + ATP = (R)-4'-phosphopantothenate + ADP + H(+). It functions in the pathway cofactor biosynthesis; coenzyme A biosynthesis; CoA from (R)-pantothenate: step 1/5. This chain is Pantothenate kinase, found in Corynebacterium glutamicum (strain ATCC 13032 / DSM 20300 / JCM 1318 / BCRC 11384 / CCUG 27702 / LMG 3730 / NBRC 12168 / NCIMB 10025 / NRRL B-2784 / 534).